We begin with the raw amino-acid sequence, 226 residues long: Membrane protein (226 aa).

Over methionine 1 to valine 11 the chain is Virion surface. A helical membrane pass occupies residues isoleucine 12–valine 32. Residues leucine 33 to serine 41 are Intravirion-facing. The helical transmembrane segment at valine 42–leucine 62 threads the bilayer. Over serine 63–tryptophan 75 the chain is Virion surface. The helical transmembrane segment at valine 76–phenylalanine 96 threads the bilayer. Over valine 97–valine 226 the chain is Intravirion. Residues arginine 200 to leucine 216 form an interaction with N protein region.

Belongs to the alphacoronaviruses M protein family. As to quaternary structure, homomultimer. Interacts with envelope E protein in the budding compartment of the host cell, which is located between endoplasmic reticulum and the Golgi complex. Forms a complex with HE and S proteins. Interacts with nucleocapsid N protein. This interaction probably participates in RNA packaging into the virus.

It localises to the virion membrane. The protein resides in the host Golgi apparatus membrane. In terms of biological role, component of the viral envelope that plays a central role in virus morphogenesis and assembly via its interactions with other viral proteins. In Sus scrofa (Pig), this protein is Membrane protein.